Here is a 118-residue protein sequence, read N- to C-terminus: Large ribosomal subunit protein uL24 (118 aa).

The protein belongs to the universal ribosomal protein uL24 family. As to quaternary structure, part of the 50S ribosomal subunit.

Functionally, one of two assembly initiator proteins, it binds directly to the 5'-end of the 23S rRNA, where it nucleates assembly of the 50S subunit. In terms of biological role, one of the proteins that surrounds the polypeptide exit tunnel on the outside of the subunit. This is Large ribosomal subunit protein uL24 from Prochlorococcus marinus (strain NATL1A).